The sequence spans 195 residues: Imidazoleglycerol-phosphate dehydratase (195 aa).

It belongs to the imidazoleglycerol-phosphate dehydratase family.

The protein resides in the cytoplasm. The enzyme catalyses D-erythro-1-(imidazol-4-yl)glycerol 3-phosphate = 3-(imidazol-4-yl)-2-oxopropyl phosphate + H2O. It participates in amino-acid biosynthesis; L-histidine biosynthesis; L-histidine from 5-phospho-alpha-D-ribose 1-diphosphate: step 6/9. In Exiguobacterium sp. (strain ATCC BAA-1283 / AT1b), this protein is Imidazoleglycerol-phosphate dehydratase.